Here is a 226-residue protein sequence, read N- to C-terminus: N-(5'-phosphoribosyl)anthranilate isomerase (226 aa).

This sequence belongs to the TrpF family.

The catalysed reaction is N-(5-phospho-beta-D-ribosyl)anthranilate = 1-(2-carboxyphenylamino)-1-deoxy-D-ribulose 5-phosphate. It functions in the pathway amino-acid biosynthesis; L-tryptophan biosynthesis; L-tryptophan from chorismate: step 3/5. The polypeptide is N-(5'-phosphoribosyl)anthranilate isomerase (trpF) (Methanothermobacter marburgensis (strain ATCC BAA-927 / DSM 2133 / JCM 14651 / NBRC 100331 / OCM 82 / Marburg) (Methanobacterium thermoautotrophicum)).